Consider the following 175-residue polypeptide: uncharacterized protein (175 aa).

This is an uncharacterized protein from Treponema pallidum (strain Nichols).